We begin with the raw amino-acid sequence, 1499 residues long: Rho GTPase-activating protein 35 (1499 aa).

The has GTPase activity, required for proper localization stretch occupies residues 1 to 266 (MMMARKQDVR…IPYFEALKQQ (266 aa)). Residues lysine 28, 33–37 (IGKSC), leucine 52, serine 56, 95–97 (EQT), 201–203 (KCD), and 229–231 (SAR) each bind GTP. FF domains are found at residues 270 to 327 (IATA…HIHR), 368 to 422 (KLLE…HLEK), 429 to 483 (RAEM…HQKQ), and 485 to 550 (IDRA…HIHF). Tyrosine 308 carries the post-translational modification Phosphotyrosine. At serine 589 the chain carries Phosphoserine. Residues 592-767 (DPNIDRINLV…LLDSKRNLNL (176 aa)) enclose the pG1 pseudoGTPase domain. 2 positions are modified to phosphoserine: serine 770 and serine 773. Positions 783–947 (RIVMCLMCGD…FKDVVEKKNI (165 aa)) constitute a pG2 pseudoGTPase domain. 4 positions are modified to phosphoserine: serine 970, serine 975, serine 985, and serine 1072. The residue at position 1087 (tyrosine 1087) is a Phosphotyrosine. A Phosphotyrosine; by ABL2 and PTK6 modification is found at tyrosine 1105. Over residues 1124-1141 (KAQSNGSGNGSDSEMDTS) the composition is skewed to polar residues. Positions 1124–1148 (KAQSNGSGNGSDSEMDTSSLERGRK) are disordered. A phosphoserine mark is found at serine 1134, serine 1142, serine 1150, serine 1176, serine 1179, and serine 1221. Residues 1177–1207 (VGSDDELGPIRKKEEDQASQGYKGDNAVIPY) are disordered. Residues 1213–1236 (PRRRNILRSLRRNTKKPKPKPRPS) form a required for phospholipid binding and regulation of the substrate preference region. Threonine 1226 carries the phosphothreonine modification. At serine 1236 the chain carries Phosphoserine. Residues 1249–1436 (VPLTTVVTPE…LFIQQCPFFF (188 aa)) enclose the Rho-GAP domain. The tract at residues 1446–1499 (GAAPGSPSAMAPTVPFLTSTPATSQPSPPQSPPPTPQSPMQPLLSSQLQAEHTL) is disordered. Low complexity predominate over residues 1448–1470 (APGSPSAMAPTVPFLTSTPATSQ). Positions 1471–1484 (PSPPQSPPPTPQSP) are enriched in pro residues. Serine 1472 and serine 1476 each carry phosphoserine. Position 1480 is a phosphothreonine (threonine 1480). The residue at position 1483 (serine 1483) is a Phosphoserine. The span at 1485–1499 (MQPLLSSQLQAEHTL) shows a compositional bias: low complexity.

In terms of assembly, interacts with RASA1. Interacts with the general transcription factor GTF2I, the interaction sequesters GTF2I in the cytoplasm. In terms of processing, phosphorylation of Tyr-1105 by PTK6 promotes the association with RASA1, inactivating RHOA while activating RAS. Phosphorylation at Tyr-308 by PDGFRA inhibits binding to GTF2I. Phosphorylated by PRKCA at Ser-1221 and Thr-1226, induces relocalization from the cytoplasm to regions of plasma membrane ruffling and prevents the binding and substrate specificity regulation by phospholipids. In brain, phosphorylated by FYN and SRC. During focal adhesion formation, phosphorylated by MAPK1 and MAPK3 at the C-terminal region, probably at Ser-1451, Ser-1476, Thr-1480 and Ser-1483. Phosphorylation by MAPK1 and MAPK3 inhibits GAP function and localizes ARGHAP35 away from newly forming focal adhesions and stress fibers in cells spreading on fibronectin. Phosphorylation at Ser-1476 and Thr-1480 by GSK3B requires priming by MAPK and inhibits RhoGAP activity and modulates polarized cell migration. As to expression, ubiquitously expressed.

The protein resides in the cytoplasm. It localises to the cytoskeleton. It is found in the cilium basal body. The protein localises to the nucleus. Its subcellular location is the cell membrane. Functionally, rho GTPase-activating protein (GAP). Binds several acidic phospholipids which inhibits the Rho GAP activity to promote the Rac GAP activity. This binding is inhibited by phosphorylation by PRKCA. Involved in cell differentiation as well as cell adhesion and migration, plays an important role in retinal tissue morphogenesis, neural tube fusion, midline fusion of the cerebral hemispheres and mammary gland branching morphogenesis. Transduces signals from p21-ras to the nucleus, acting via the ras GTPase-activating protein (GAP). Transduces SRC-dependent signals from cell-surface adhesion molecules, such as laminin, to promote neurite outgrowth. Regulates axon outgrowth, guidance and fasciculation. Modulates Rho GTPase-dependent F-actin polymerization, organization and assembly, is involved in polarized cell migration and in the positive regulation of ciliogenesis and cilia elongation. During mammary gland development, is required in both the epithelial and stromal compartments for ductal outgrowth. Represses transcription of the glucocorticoid receptor by binding to the cis-acting regulatory sequence 5'-GAGAAAAGAAACTGGAGAAACTC-3'; this function is however unclear and would need additional experimental evidences. The chain is Rho GTPase-activating protein 35 from Rattus norvegicus (Rat).